We begin with the raw amino-acid sequence, 764 residues long: 5-methyltetrahydropteroyltriglutamate--homocysteine methyltransferase (764 aa).

Residues 16–19 (RELK) and Lys-115 contribute to the 5-methyltetrahydropteroyltri-L-glutamate site. L-homocysteine-binding positions include 435–437 (IGS) and Glu-488. L-methionine-binding positions include 435–437 (IGS) and Glu-488. 5-methyltetrahydropteroyltri-L-glutamate is bound by residues 519–520 (RC) and Trp-565. Asp-603 is an L-homocysteine binding site. Asp-603 is an L-methionine binding site. Residue Glu-609 coordinates 5-methyltetrahydropteroyltri-L-glutamate. Zn(2+) is bound by residues His-645, Cys-647, and Glu-669. Catalysis depends on His-698, which acts as the Proton donor. Cys-730 contributes to the Zn(2+) binding site.

It belongs to the vitamin-B12 independent methionine synthase family. Requires Zn(2+) as cofactor.

The catalysed reaction is 5-methyltetrahydropteroyltri-L-glutamate + L-homocysteine = tetrahydropteroyltri-L-glutamate + L-methionine. It functions in the pathway amino-acid biosynthesis; L-methionine biosynthesis via de novo pathway; L-methionine from L-homocysteine (MetE route): step 1/1. Catalyzes the transfer of a methyl group from 5-methyltetrahydrofolate to homocysteine resulting in methionine formation. The polypeptide is 5-methyltetrahydropteroyltriglutamate--homocysteine methyltransferase (Burkholderia pseudomallei (strain 668)).